A 412-amino-acid chain; its full sequence is Trafficking protein particle complex subunit 13 (412 aa).

This sequence belongs to the TRAPPC13 family. Part of the multisubunit TRAPP (transport protein particle) complex.

This is Trafficking protein particle complex subunit 13 (trappc13) from Danio rerio (Zebrafish).